A 594-amino-acid polypeptide reads, in one-letter code: Glomulin (594 aa).

Alanine 2 is modified (N-acetylalanine). Residues alanine 2–methionine 553 are alpha-helical region with structural similarity to HEAT repeats. The interval isoleucine 300–lysine 594 is important for interaction with RBX1.

Interacts with FKBP4 and FKBP1A. Isoform 1: Interacts with RBX1 (via RING domain). Identified in complexes that contain RBX1 plus one of the cullins CUL1, CUL2, CUL3, and CUL4A. Identified in a SCF complex composed of CUL1, RBX1, SKP1, FBXW7 and GLMN. Component of a SCF-like complex consisting of CUL7, RBX1, SKP1, FBXW8 and GLMN. Interacts with unphosphorylated MET and is released upon MET phosphorylation. In terms of processing, phosphorylated on tyrosine residues. In terms of tissue distribution, ubiquitous.

Its function is as follows. Regulatory component of cullin-RING-based SCF (SKP1-Cullin-F-box protein) E3 ubiquitin-protein ligase complexes. Inhibits E3 ubiquitin ligase activity by binding to RBX1 (via RING domain) and inhibiting its interaction with the E2 ubiquitin-conjugating enzyme CDC34. Inhibits RBX1-mediated neddylation of CUL1. Required for normal stability and normal cellular levels of key components of SCF ubiquitin ligase complexes, including FBXW7, RBX1, CUL1, CUL2, CUL3, CUL4A, and thereby contributes to the regulation of CCNE1 and MYC levels. Essential for normal development of the vasculature. Contributes to the regulation of RPS6KB1 phosphorylation. This chain is Glomulin (GLMN), found in Homo sapiens (Human).